Reading from the N-terminus, the 205-residue chain is Cytochrome c biogenesis ATP-binding export protein CcmA (205 aa).

Positions 2–204 constitute an ABC transporter domain; it reads LEVSNLTAIR…SPKLRKIKLG (203 aa). 34-41 serves as a coordination point for ATP; the sequence is GRNGTGKT.

It belongs to the ABC transporter superfamily. CcmA exporter (TC 3.A.1.107) family. The complex is composed of two ATP-binding proteins (CcmA) and two transmembrane proteins (CcmB).

The protein localises to the cell inner membrane. It carries out the reaction heme b(in) + ATP + H2O = heme b(out) + ADP + phosphate + H(+). Part of the ABC transporter complex CcmAB involved in the biogenesis of c-type cytochromes; once thought to export heme, this seems not to be the case, but its exact role is uncertain. Responsible for energy coupling to the transport system. This Vibrio parahaemolyticus serotype O3:K6 (strain RIMD 2210633) protein is Cytochrome c biogenesis ATP-binding export protein CcmA.